Reading from the N-terminus, the 163-residue chain is uncharacterized protein (163 aa).

The stretch at 101-162 forms a coiled coil; the sequence is LESMKVERKP…KMGERILERE (62 aa).

This is an uncharacterized protein from Aquifex aeolicus (strain VF5).